Here is a 539-residue protein sequence, read N- to C-terminus: G protein-coupled receptor associated sorting protein 3 (539 aa).

The segment covering 1–10 (MTGSKNKARA) has biased composition (basic residues). Disordered regions lie at residues 1 to 112 (MTGS…NWFW) and 134 to 172 (VAKCENKPSTSIQARAEEPAPRTSHKSRSGAEEEEEENV). Basic and acidic residues-rich tracts occupy residues 66–80 (VVAETKEGARPESKA) and 88–106 (FNHRTENKFARSTRKDKPS). Residues 134 to 146 (VAKCENKPSTSIQ) are compositionally biased toward polar residues.

Belongs to the GPRASP family. As to quaternary structure, homodimer.

Its subcellular location is the cytoplasm. The protein resides in the nucleus. Functionally, survival and differentiation promoting protein that plays a role in the regulation of neurosynaptogenesis. Induces phosphatase PP2A activity which results in APP dephosphorylation and inhibits BACE1-mediated processing of APP. This is G protein-coupled receptor associated sorting protein 3 (Gprasp3) from Mus musculus (Mouse).